A 147-amino-acid chain; its full sequence is Bis(5'-adenosyl)-triphosphatase (147 aa).

The HIT domain occupies 2 to 109 (SFRFGQHLIK…LPRKAGDFHR (108 aa)). Substrate is bound by residues His-8, Asn-27, Gln-83, and 89 to 92 (GQTV). Positions 94 to 98 (HVHVH) match the Histidine triad motif motif. His-96 acts as the Tele-AMP-histidine intermediate in catalysis. His-98 contributes to the substrate binding site. Tyr-114 bears the Phosphotyrosine; by SRC mark. Residue Tyr-145 is modified to Phosphotyrosine.

As to quaternary structure, homodimer. Interacts with UBE2I. Interacts with MDM2. Interacts with CTNNB1. Identified in a complex with CTNNB1 and LEF1. Post-translationally, phosphorylation at Tyr-114 by SRC is required for induction of apoptosis. In terms of tissue distribution, low levels expressed in all tissues tested. Phospho-FHIT observed in liver and kidney, but not in brain and lung. Phospho-FHIT undetected in all tested human tumor cell lines.

It localises to the cytoplasm. The protein localises to the mitochondrion. The protein resides in the nucleus. The catalysed reaction is P(1),P(3)-bis(5'-adenosyl) triphosphate + H2O = AMP + ADP + 2 H(+). It carries out the reaction adenosine 5'-phosphosulfate + H2O = sulfate + AMP + 2 H(+). The enzyme catalyses adenosine 5'-phosphosulfate + NH4(+) = adenosine 5'-phosphoramidate + sulfate + 2 H(+). It catalyses the reaction adenosine 5'-phosphoramidate + H2O = AMP + NH4(+). In terms of biological role, possesses dinucleoside triphosphate hydrolase activity. Cleaves P(1)-P(3)-bis(5'-adenosyl) triphosphate (Ap3A) to yield AMP and ADP. Can also hydrolyze P(1)-P(4)-bis(5'-adenosyl) tetraphosphate (Ap4A), but has extremely low activity with ATP. Exhibits adenylylsulfatase activity, hydrolyzing adenosine 5'-phosphosulfate to yield AMP and sulfate. Exhibits adenosine 5'-monophosphoramidase activity, hydrolyzing purine nucleotide phosphoramidates with a single phosphate group such as adenosine 5'monophosphoramidate (AMP-NH2) to yield AMP and NH2. Exhibits adenylylsulfate-ammonia adenylyltransferase, catalyzing the ammonolysis of adenosine 5'-phosphosulfate resulting in the formation of adenosine 5'-phosphoramidate. Also catalyzes the ammonolysis of adenosine 5-phosphorofluoridate and diadenosine triphosphate. Modulates transcriptional activation by CTNNB1 and thereby contributes to regulate the expression of genes essential for cell proliferation and survival, such as CCND1 and BIRC5. Plays a role in the induction of apoptosis via SRC and AKT1 signaling pathways. Inhibits MDM2-mediated proteasomal degradation of p53/TP53 and thereby plays a role in p53/TP53-mediated apoptosis. Induction of apoptosis depends on the ability of FHIT to bind P(1)-P(3)-bis(5'-adenosyl) triphosphate or related compounds, but does not require its catalytic activity, it may in part come from the mitochondrial form, which sensitizes the low-affinity Ca(2+) transporters, enhancing mitochondrial calcium uptake. Functions as a tumor suppressor. This chain is Bis(5'-adenosyl)-triphosphatase (FHIT), found in Homo sapiens (Human).